A 295-amino-acid polypeptide reads, in one-letter code: Proline-rich protein 32 (295 aa).

2 disordered regions span residues 10-48 and 101-120; these read GHAP…GHPG and ATGE…SGQD.

This is Proline-rich protein 32 (PRR32) from Bos taurus (Bovine).